A 452-amino-acid polypeptide reads, in one-letter code: Low-affinity putrescine importer PlaP (452 aa).

The Cytoplasmic segment spans residues 1 to 16 (MSHNVTPNTSRVELRK). The helical transmembrane segment at 17-37 (TLTLVPVVMMGLAYMQPMTLF) threads the bilayer. The Periplasmic portion of the chain corresponds to 38–48 (DTFGIVSGLTD). Residues 49-69 (GHVPTAYAFALIAILFTALSY) form a helical membrane-spanning segment. At 70–95 (GKLVRRYPSAGSAYTYAQKSISPTVG) the chain is on the cytoplasmic side. Residues 96-116 (FMVGWSSLLDYLFAPMINILL) form a helical membrane-spanning segment. Topologically, residues 117 to 123 (AKIYFEA) are periplasmic. Residues 124-144 (LVPSIPSWMFVVALVAFMTAF) form a helical membrane-spanning segment. Residues 145–158 (NLRSLKSVANFNTV) lie on the Cytoplasmic side of the membrane. The helical transmembrane segment at 159 to 179 (IVVLQVVLIAVILGMVVYGVF) threads the bilayer. Residues 180–199 (EGEGAGTLASTRPFWSGDAH) are Periplasmic-facing. The helical transmembrane segment at 200-220 (VIPMITGATILCFSFTGFDGI) threads the bilayer. Residues 221-237 (SNLSEETKDAERVIPRA) lie on the Cytoplasmic side of the membrane. The helical transmembrane segment at 238 to 258 (IFLTALIGGMIFIFATYFLQL) threads the bilayer. The Periplasmic segment spans residues 259–283 (YFPDISRFKDPDASQPEIMLYVAGK). Residues 284 to 304 (AFQVGALIFSTITVLASGMAA) form a helical membrane-spanning segment. Over 305–339 (HAGVARLMYVMGRDGVFPKSFFGYVHPKWRTPAMN) the chain is Cytoplasmic. A run of 2 helical transmembrane segments spans residues 340–360 (IILV…MATA) and 361–381 (LINF…ISQF). The Cytoplasmic segment spans residues 382 to 394 (WIREKRNKTLKDH). A helical transmembrane segment spans residues 395–415 (FQYLFLPMCGALTVGALWVNL). Topologically, residues 416–417 (EE) are periplasmic. Residues 418–438 (SSMVLGLIWAAIGLIYLACVT) traverse the membrane as a helical segment. At 439–452 (KSFRNPVPQYEDVA) the chain is on the cytoplasmic side.

The protein belongs to the amino acid-polyamine-organocation (APC) superfamily.

The protein resides in the cell inner membrane. The catalysed reaction is putrescine(in) + H(+)(in) = putrescine(out) + H(+)(out). In terms of biological role, putrescine importer. This chain is Low-affinity putrescine importer PlaP (plaP), found in Escherichia coli O157:H7.